The sequence spans 138 residues: DNA-directed RNA polymerase II subunit 4 (138 aa).

Serine 2 carries the N-acetylserine modification.

This sequence belongs to the eukaryotic RPB4 RNA polymerase subunit family. In terms of assembly, component of the RNA polymerase II complex consisting of at least 12 subunits. Interacts with NRPB7.

The protein localises to the nucleus. In terms of biological role, DNA-dependent RNA polymerase catalyzes the transcription of DNA into RNA using the four ribonucleoside triphosphates as substrates. Second largest component of RNA polymerase II which synthesizes mRNA precursors and many functional non-coding RNAs. Proposed to contribute to the polymerase catalytic activity and forms the polymerase active center together with the largest subunit. Pol II is the central component of the basal RNA polymerase II transcription machinery. It is composed of mobile elements that move relative to each other. This is DNA-directed RNA polymerase II subunit 4 (NRPB4) from Arabidopsis thaliana (Mouse-ear cress).